The following is a 155-amino-acid chain: Small ribosomal subunit protein uS7cz/uS7cy (155 aa).

The protein belongs to the universal ribosomal protein uS7 family. As to quaternary structure, part of the 30S ribosomal subunit.

It is found in the plastid. The protein localises to the chloroplast. Its function is as follows. One of the primary rRNA binding proteins, it binds directly to 16S rRNA where it nucleates assembly of the head domain of the 30S subunit. The chain is Small ribosomal subunit protein uS7cz/uS7cy (rps7-A) from Vitis vinifera (Grape).